An 875-amino-acid polypeptide reads, in one-letter code: Alanine--tRNA ligase (875 aa).

Residues 426-445 form a disordered region; the sequence is ERSRKNTVKNKNDSDSIFQD. Residues His-561, His-565, Cys-663, and His-667 each contribute to the Zn(2+) site.

It belongs to the class-II aminoacyl-tRNA synthetase family. It depends on Zn(2+) as a cofactor.

It is found in the cytoplasm. It carries out the reaction tRNA(Ala) + L-alanine + ATP = L-alanyl-tRNA(Ala) + AMP + diphosphate. In terms of biological role, catalyzes the attachment of alanine to tRNA(Ala) in a two-step reaction: alanine is first activated by ATP to form Ala-AMP and then transferred to the acceptor end of tRNA(Ala). Also edits incorrectly charged Ser-tRNA(Ala) and Gly-tRNA(Ala) via its editing domain. The protein is Alanine--tRNA ligase of Chlamydia muridarum (strain MoPn / Nigg).